Consider the following 518-residue polypeptide: Putative N-acetylmuramoyl-L-alanine amidase YrvJ (518 aa).

A signal peptide spans M1–A27. SH3b domains lie at Q29–E91, S102–G164, S181–S243, and A258–S320. Disordered regions lie at residues A94 to S121 and V160 to V186. 2 stretches are compositionally biased toward low complexity: residues S95–T108 and V160–S169. Residues S322–H352 form a disordered region. Over residues D333 to T345 the composition is skewed to polar residues. The 169-residue stretch at I346–E514 folds into the MurNAc-LAA domain.

The protein belongs to the N-acetylmuramoyl-L-alanine amidase 3 family.

Its subcellular location is the secreted. The protein localises to the cell wall. The catalysed reaction is Hydrolyzes the link between N-acetylmuramoyl residues and L-amino acid residues in certain cell-wall glycopeptides.. Functionally, probably involved in cell-wall metabolism. This chain is Putative N-acetylmuramoyl-L-alanine amidase YrvJ (yrvJ), found in Bacillus subtilis (strain 168).